The chain runs to 364 residues: MRSSYRVGNPIRFQPTNVVGLLLLSLVLSFMLVQSYELGHASGETNANSKYPLTTPVEENLKVRFKIGVISDDDKNAVSKDESNTWVSTYLTGTLEWEKSTDKITVQWDKGNEKKVKSKYSYGGRGMELSELVTFNGNLLTFDDRTGLVYILKDDKVYPWVVLADGDGKNSKGFKSEWATEKAGNLYVGSSGKEWTTKEGTIENYNPMWVKMINKNGEVTSLNWQTNYEKIRSSMNITFPGYMWHEAACWSDKYNKWFFLPRALSQEAYDSKKFETQGANVIISCDDKFEKCEPTQIQGKTEDKRGFSNFKFVPTSEDKIIVGLKTVEADDTTETYFTAFDLEGKVLLEETKIDDHKYEGVDFV.

Residues 1 to 35 form the signal peptide; it reads MRSSYRVGNPIRFQPTNVVGLLLLSLVLSFMLVQS.

The protein belongs to the apyrase family. Ca(2+) is required as a cofactor. In terms of tissue distribution, salivary gland (at protein level).

It is found in the secreted. It catalyses the reaction a ribonucleoside 5'-triphosphate + 2 H2O = a ribonucleoside 5'-phosphate + 2 phosphate + 2 H(+). Facilitates hematophagy by inhibiting ADP-dependent platelet aggregation in the host. Cleaves adenosine triphosphate (ATP) and adenosine diphosphate (ADP) to adenosine monophosphate (AMP) and inorganic phosphate in calcium-dependent manner. This chain is Apyrase, found in Cimex lectularius (Bed bug).